We begin with the raw amino-acid sequence, 1198 residues long: Sterol 3-beta-glucosyltransferase (1198 aa).

The span at 1 to 11 (MPITQIISASD) shows a compositional bias: polar residues. Disordered regions lie at residues 1–89 (MPIT…DNAD) and 124–162 (SQVD…PEVP). The segment covering 35-51 (RHHRLSRSLSKFKRWRG) has biased composition (basic residues). Low complexity predominate over residues 52 to 67 (RSNSSLSMGSSEQQEL). Phosphoserine is present on Ser-76. Residues 146 to 162 (VKSKKENLKTKSHPEVP) are compositionally biased toward basic and acidic residues. The GRAM 1 domain occupies 187–236 (AKLRQRFCLDEQEPFLNDFPAWLLKDVLVQGHIFITTKHFLFFAYLPKNP). One can recognise a PH domain in the interval 238–336 (SVKMSGNLNI…WVNALKKEQF (99 aa)). The segment at 427 to 465 (KSSFGKETPATAEQKNNGEDSKYLNVPTSAVPSSENGKK) is disordered. Residues 452–461 (VPTSAVPSSE) show a composition bias toward polar residues. One can recognise a GRAM 2 domain in the interval 570–636 (ERFRYHFKFN…VDVETCYKEK (67 aa)). Ser-693 is modified (phosphoserine). Ser-749, Arg-750, Asp-752, Asn-1025, Asn-1053, Val-1054, His-1056, His-1069, Ser-1072, Gly-1073, Thr-1074, Asp-1093, and Gln-1094 together coordinate UDP-alpha-D-glucose.

This sequence belongs to the glycosyltransferase 28 family.

It localises to the cytoplasm. The protein localises to the membrane. It catalyses the reaction a sterol + UDP-alpha-D-glucose = a sterol 3-beta-D-glucoside + UDP + H(+). The catalysed reaction is ergosterol + UDP-alpha-D-glucose = ergosteryl 3-beta-D-glucoside + UDP + H(+). Functionally, sterol glycosyltransferase responsible for the glycosylation of ergosterol to form ergosterol-glucoside. Also shows activity in vitro on other sterols such as cholesterol, beta-sitosterol, stigmasterol and tomatidine. In contrasts to what is observed in Pichia pastoris and Aspergillus oryzae, is not involved in cytoplasm to vacuole transport (Cvt), pexophagy or nonselective autophagy in Saccharomyces cerevisiae. The protein is Sterol 3-beta-glucosyltransferase of Saccharomyces cerevisiae (strain YJM789) (Baker's yeast).